The chain runs to 1263 residues: Multidrug resistance protein sirA (1263 aa).

Residues 1–21 are disordered; the sequence is MAEPESEKPSSAQGGGLPSSD. 4 helical membrane passes run 57–77, 104–124, 179–199, and 206–226; these read LISA…ILFI, IALY…IFTN, KIGL…IGFV, and FILT…SGFM. The ABC transmembrane type-1 1 domain occupies 57–347; it reads LISAFFAAVS…VGPHLQAMSL (291 aa). Asn232 carries an N-linked (GlcNAc...) asparagine glycan. A run of 2 helical transmembrane segments spans residues 284-304 and 318-338; these read VMGW…GLAI and VGAI…FGNV. Residues 380–625 form the ABC transporter 1 domain; it reads IEFRNVSHVY…EGLYQTFVRR (246 aa). A glycan (N-linked (GlcNAc...) asparagine) is linked at Asn384. 415–422 is an ATP binding site; that stretch reads GASGSGKS. Residue Asn469 is glycosylated (N-linked (GlcNAc...) asparagine). The tract at residues 635–672 is disordered; sequence PPHARITPAVDTPASPQHRLSEKTGSIYGQGESEAADK. A run of 6 helical transmembrane segments spans residues 699-719, 740-760, 817-839, 843-865, 930-950, and 960-980; these read VTGI…SVFF, FWAA…GVQG, VFLG…SLAV, LTLV…LKLV, LSEA…ATLV, and FFIV…VFAF. Residues 699 to 986 form the ABC transmembrane type-1 2 domain; it reads VTGIASAVIS…VFAFAPDFGK (288 aa). Positions 1021-1259 constitute an ABC transporter 2 domain; the sequence is VDVSNVVFYY…RGSYYDSVNL (239 aa). 1056–1063 contributes to the ATP binding site; that stretch reads GGSGSGKS.

Belongs to the ABC transporter superfamily. ABCB family. Multidrug resistance exporter (TC 3.A.1.201) subfamily.

It is found in the cell membrane. The enzyme catalyses ATP + H2O + xenobioticSide 1 = ADP + phosphate + xenobioticSide 2.. Sirodesmin transporter that provides the dual role of sirodesmin export and self-protection. Also provides tolerance to gliotoxin. The sequence is that of Multidrug resistance protein sirA from Leptosphaeria maculans (Blackleg fungus).